The primary structure comprises 230 residues: Androgen-dependent TFPI-regulating protein (230 aa).

Residues 1 to 7 (MTKTTTC) lie on the Cytoplasmic side of the membrane. Residues 8-28 (LYHFVVLNWYIFLNYYIPQIG) traverse the membrane as a helical segment. The Extracellular portion of the chain corresponds to 29-45 (KDEEKLKEFHDGGRSKY). A helical membrane pass occupies residues 46–66 (LTLLNLLLQAVFFGVACLDDV). At 67 to 85 (LKRVIGRKDIKFITYFRDL) the chain is on the cytoplasmic side. A helical membrane pass occupies residues 86 to 106 (LFTTLAFPLSTFVFLVFWSLF). Residues 107–120 (HYDRSLVYPKGLDD) lie on the Extracellular side of the membrane. The helical transmembrane segment at 121 to 141 (FFPAWVNHAMHTSIFPFSLAE) threads the bilayer. Residues 142 to 155 (TVLRPHNYPSKKLG) are Cytoplasmic-facing. The chain crosses the membrane as a helical span at residues 156-173 (LSLLGACNFAYIIRILWR). The Extracellular segment spans residues 174 to 190 (YVQTGNWVYPVFASLSP). A helical transmembrane segment spans residues 191–211 (LGIILFFSASYILSASLYLFG). Topologically, residues 212 to 230 (EKINHWKWGATVKPRMKKN) are cytoplasmic.

Belongs to the AIG1 family.

The protein localises to the cell membrane. It catalyses the reaction 9-hexadecanoyloxy-octadecanoate + H2O = 9-hydroxy-octadecanoate + hexadecanoate + H(+). The catalysed reaction is 12-hexadecanoyloxy-octadecanoate + H2O = 12-hydroxyoctadecanoate + hexadecanoate + H(+). The enzyme catalyses 9-(9Z-hexadecenoyloxy)-octadecanoate + H2O = (9Z)-hexadecenoate + 9-hydroxy-octadecanoate + H(+). It carries out the reaction 12-(9Z-hexadecenoyloxy)-octadecanoate + H2O = 12-hydroxyoctadecanoate + (9Z)-hexadecenoate + H(+). It catalyses the reaction 13-(9Z-hexadecenoyloxy)-octadecanoate + H2O = 13-hydroxy-octadecanoate + (9Z)-hexadecenoate + H(+). The catalysed reaction is 9-octadecanoyloxy-octadecanoate + H2O = 9-hydroxy-octadecanoate + octadecanoate + H(+). The enzyme catalyses 12-octadecanoyloxy-octadecanoate + H2O = 12-hydroxyoctadecanoate + octadecanoate + H(+). It carries out the reaction 13-octadecanoyloxy-octadecanoate + H2O = 13-hydroxy-octadecanoate + octadecanoate + H(+). It catalyses the reaction 9-(9Z-octadecenoyloxy)-octadecanoate + H2O = 9-hydroxy-octadecanoate + (9Z)-octadecenoate + H(+). The catalysed reaction is 12-(9Z-octadecenoyloxy)-octadecanoate + H2O = 12-hydroxyoctadecanoate + (9Z)-octadecenoate + H(+). The enzyme catalyses 13-(9Z-octadecenoyloxy)-octadecanoate + H2O = 13-hydroxy-octadecanoate + (9Z)-octadecenoate + H(+). It carries out the reaction 5-(9Z-octadecenoyloxy)-octadecanoate + H2O = 5-hydroxy-octadecanoate + (9Z)-octadecenoate + H(+). Hydrolyzes bioactive fatty-acid esters of hydroxy-fatty acids (FAHFAs), but not other major classes of lipids. Shows a preference for FAHFAs with branching distal from the carboxylate head group of the lipids. Regulates the expression and the cell-associated anticoagulant activity of the inhibitor TFPI in endothelial cells (in vitro). The protein is Androgen-dependent TFPI-regulating protein (Adtrp) of Rattus norvegicus (Rat).